The following is a 542-amino-acid chain: Chaperonin GroEL 1 (542 aa).

ATP is bound by residues 29-32 (TLGP), 86-90 (DGTTT), glycine 413, 477-479 (NAA), and aspartate 493.

Belongs to the chaperonin (HSP60) family. Forms a cylinder of 14 subunits composed of two heptameric rings stacked back-to-back. Interacts with the co-chaperonin GroES.

The protein resides in the cytoplasm. The enzyme catalyses ATP + H2O + a folded polypeptide = ADP + phosphate + an unfolded polypeptide.. Functionally, together with its co-chaperonin GroES, plays an essential role in assisting protein folding. The GroEL-GroES system forms a nano-cage that allows encapsulation of the non-native substrate proteins and provides a physical environment optimized to promote and accelerate protein folding. This is Chaperonin GroEL 1 from Kineococcus radiotolerans (strain ATCC BAA-149 / DSM 14245 / SRS30216).